The chain runs to 352 residues: Enhancer of mRNA-decapping protein 1 (352 aa).

Disordered stretches follow at residues M1–H258 and Q277–S352. A compositionally biased stretch (low complexity) spans H71–K80. Polar residues-rich tracts occupy residues N93–G104 and T205–V225. The span at G289–Q309 shows a compositional bias: low complexity.

The protein belongs to the EDC family.

It is found in the cytoplasm. MRNA-binding protein which stimulates mRNA decapping. This Debaryomyces hansenii (strain ATCC 36239 / CBS 767 / BCRC 21394 / JCM 1990 / NBRC 0083 / IGC 2968) (Yeast) protein is Enhancer of mRNA-decapping protein 1 (EDC1).